The sequence spans 298 residues: Urease accessory protein UreD (298 aa).

The protein belongs to the UreD family. UreD, UreF and UreG form a complex that acts as a GTP-hydrolysis-dependent molecular chaperone, activating the urease apoprotein by helping to assemble the nickel containing metallocenter of UreC. The UreE protein probably delivers the nickel.

Its subcellular location is the cytoplasm. Its function is as follows. Required for maturation of urease via the functional incorporation of the urease nickel metallocenter. The sequence is that of Urease accessory protein UreD from Frankia alni (strain DSM 45986 / CECT 9034 / ACN14a).